The chain runs to 354 residues: Selenide, water dikinase (354 aa).

The active site involves C23. Residues K26 and 54–56 (TSD) each bind ATP. D57 is a Mg(2+) binding site. Residues D74, D97, and 145–147 (GHS) each bind ATP. D97 contributes to the Mg(2+) binding site. D233 is a binding site for Mg(2+).

This sequence belongs to the selenophosphate synthase 1 family. Class I subfamily. In terms of assembly, homodimer. Mg(2+) is required as a cofactor.

The enzyme catalyses hydrogenselenide + ATP + H2O = selenophosphate + AMP + phosphate + 2 H(+). Its function is as follows. Synthesizes selenophosphate from selenide and ATP. The polypeptide is Selenide, water dikinase (Burkholderia cenocepacia (strain ATCC BAA-245 / DSM 16553 / LMG 16656 / NCTC 13227 / J2315 / CF5610) (Burkholderia cepacia (strain J2315))).